Consider the following 81-residue polypeptide: Protein Vpu (81 aa).

The Extracellular segment spans residues 1 to 6 (MQPIQI). The helical transmembrane segment at 7–27 (AIVALVVAIIIAIVVWSIVII) threads the bilayer. The Cytoplasmic segment spans residues 28–81 (EYRKILRQRKIDRLIDRLIERAEDSGNESEGEISALAEMGVEMGHHAPWDVDDL). Phosphoserine; by host CK2 is present on residues Ser52 and Ser56.

Belongs to the HIV-1 VPU protein family. In terms of assembly, homopentamer. Interacts with host CD4 and BRTC; these interactions induce proteasomal degradation of CD4. Interacts with host BST2; this interaction leads to the degradation of host BST2. Interacts with host FBXW11. Interacts with host AP1M1; this interaction plays a role in the mistrafficking and subsequent degradation of host BST2. Interacts with host RANBP2; this interaction allows Vpu to down-regulate host BLM sumoylation. Phosphorylated by host CK2. This phosphorylation is necessary for interaction with human BTRC and degradation of CD4.

It localises to the host membrane. Its activity is regulated as follows. Ion channel activity is inhibited by hexamethylene amiloride in vitro. Functionally, enhances virion budding by targeting host CD4 and Tetherin/BST2 to proteasome degradation. Degradation of CD4 prevents any unwanted premature interactions between viral Env and its host receptor CD4 in the endoplasmic reticulum. Degradation of antiretroviral protein Tetherin/BST2 is important for virion budding, as BST2 tethers new viral particles to the host cell membrane. Mechanistically, Vpu bridges either CD4 or BST2 to BTRC, a substrate recognition subunit of the Skp1/Cullin/F-box protein E3 ubiquitin ligase, induces their ubiquitination and subsequent proteasomal degradation. The alteration of the E3 ligase specificity by Vpu seems to promote the degradation of host IKBKB, leading to NF-kappa-B down-regulation and subsequent apoptosis. Acts as a viroporin that forms an oligomeric ion channel in membranes. Modulates the host DNA repair mechanisms to promote degradation of nuclear viral cDNA in cells that are already productively infected in order to suppress immune sensing and proviral hyper-integration (superinfection). Manipulates PML-NBs and modulates SUMOylation of host BLM protein thereby enhancing its DNA-end processing activity toward viral unintegrated linear DNA. Also inhibits RAD52-mediated homologous repair of viral cDNA, preventing the generation of dead-end circular forms of single copies of the long terminal repeat and permitting sustained nucleolytic attack. The polypeptide is Protein Vpu (Homo sapiens (Human)).